Consider the following 178-residue polypeptide: ATP-dependent protease subunit HslV (178 aa).

Residue Thr7 is part of the active site. 3 residues coordinate Na(+): Gly162, Cys165, and Thr168.

This sequence belongs to the peptidase T1B family. HslV subfamily. In terms of assembly, a double ring-shaped homohexamer of HslV is capped on each side by a ring-shaped HslU homohexamer. The assembly of the HslU/HslV complex is dependent on binding of ATP.

It localises to the cytoplasm. It catalyses the reaction ATP-dependent cleavage of peptide bonds with broad specificity.. Its activity is regulated as follows. Allosterically activated by HslU binding. In terms of biological role, protease subunit of a proteasome-like degradation complex believed to be a general protein degrading machinery. In Cupriavidus metallidurans (strain ATCC 43123 / DSM 2839 / NBRC 102507 / CH34) (Ralstonia metallidurans), this protein is ATP-dependent protease subunit HslV.